We begin with the raw amino-acid sequence, 55 residues long: Neurotoxin B-II (55 aa).

Pro10 carries the hydroxyproline modification. Disulfide bonds link Cys12/Cys48, Cys16/Cys52, Cys23/Cys41, and Cys26/Cys37.

The protein belongs to the worm B-toxin family.

The protein resides in the secreted. In terms of biological role, this toxin increases the excitability of nerves by delaying the inactivation of the voltage-gated sodium channel (Nav). Only acts on some crustacean. Neurotoxin B-II is less abundant, but 15-fold more toxic than neurotoxin B-VI. The chain is Neurotoxin B-II from Cerebratulus lacteus (Milky ribbon worm).